The chain runs to 304 residues: Oxygen-dependent coproporphyrinogen-III oxidase (304 aa).

Ser94 is a binding site for substrate. The a divalent metal cation site is built by His98 and His108. Catalysis depends on His108, which acts as the Proton donor. 110 to 112 (NVR) contributes to the substrate binding site. Residues His147 and His177 each contribute to the a divalent metal cation site. An important for dimerization region spans residues 242-277 (YVEFNLVYDRGTLFGLQTGGRTESILMSMPPLVRWE). 260 to 262 (GGR) serves as a coordination point for substrate.

The protein belongs to the aerobic coproporphyrinogen-III oxidase family. Homodimer. A divalent metal cation is required as a cofactor.

It localises to the cytoplasm. The enzyme catalyses coproporphyrinogen III + O2 + 2 H(+) = protoporphyrinogen IX + 2 CO2 + 2 H2O. It participates in porphyrin-containing compound metabolism; protoporphyrin-IX biosynthesis; protoporphyrinogen-IX from coproporphyrinogen-III (O2 route): step 1/1. Functionally, involved in the heme biosynthesis. Catalyzes the aerobic oxidative decarboxylation of propionate groups of rings A and B of coproporphyrinogen-III to yield the vinyl groups in protoporphyrinogen-IX. The polypeptide is Oxygen-dependent coproporphyrinogen-III oxidase (Shewanella pealeana (strain ATCC 700345 / ANG-SQ1)).